The chain runs to 140 residues: Large ribosomal subunit protein uL11 (140 aa).

This sequence belongs to the universal ribosomal protein uL11 family. As to quaternary structure, part of the ribosomal stalk of the 50S ribosomal subunit. Interacts with L10 and the large rRNA to form the base of the stalk. L10 forms an elongated spine to which L12 dimers bind in a sequential fashion forming a multimeric L10(L12)X complex. One or more lysine residues are methylated.

Functionally, forms part of the ribosomal stalk which helps the ribosome interact with GTP-bound translation factors. The polypeptide is Large ribosomal subunit protein uL11 (Desulforapulum autotrophicum (strain ATCC 43914 / DSM 3382 / VKM B-1955 / HRM2) (Desulfobacterium autotrophicum)).